Consider the following 576-residue polypeptide: Dihydroxy-acid dehydratase (576 aa).

Position 56 (C56) interacts with [2Fe-2S] cluster. D88 is a Mg(2+) binding site. C129 contributes to the [2Fe-2S] cluster binding site. The Mg(2+) site is built by D130 and K131. K131 is subject to N6-carboxylysine. C201 is a [2Fe-2S] cluster binding site. Residue E453 coordinates Mg(2+). S479 serves as the catalytic Proton acceptor.

Belongs to the IlvD/Edd family. Homodimer. Requires [2Fe-2S] cluster as cofactor. The cofactor is Mg(2+).

The catalysed reaction is (2R)-2,3-dihydroxy-3-methylbutanoate = 3-methyl-2-oxobutanoate + H2O. The enzyme catalyses (2R,3R)-2,3-dihydroxy-3-methylpentanoate = (S)-3-methyl-2-oxopentanoate + H2O. Its pathway is amino-acid biosynthesis; L-isoleucine biosynthesis; L-isoleucine from 2-oxobutanoate: step 3/4. It functions in the pathway amino-acid biosynthesis; L-valine biosynthesis; L-valine from pyruvate: step 3/4. Functionally, functions in the biosynthesis of branched-chain amino acids. Catalyzes the dehydration of (2R,3R)-2,3-dihydroxy-3-methylpentanoate (2,3-dihydroxy-3-methylvalerate) into 2-oxo-3-methylpentanoate (2-oxo-3-methylvalerate) and of (2R)-2,3-dihydroxy-3-methylbutanoate (2,3-dihydroxyisovalerate) into 2-oxo-3-methylbutanoate (2-oxoisovalerate), the penultimate precursor to L-isoleucine and L-valine, respectively. This Parvibaculum lavamentivorans (strain DS-1 / DSM 13023 / NCIMB 13966) protein is Dihydroxy-acid dehydratase.